A 377-amino-acid polypeptide reads, in one-letter code: TraB domain-containing protein (377 aa).

Met-1 carries the N-acetylmethionine modification. Positions Met-1–Pro-34 are disordered. Thr-65 carries the post-translational modification Phosphothreonine.

This is TraB domain-containing protein (TRABD) from Bos taurus (Bovine).